Reading from the N-terminus, the 640-residue chain is Chaperone protein HtpG (640 aa).

The segment at 1–348 (MADVAHQETH…SNDLPLNVSR (348 aa)) is a; substrate-binding. Residues 349-565 (EILQDNKITQ…GTGMSTQMIK (217 aa)) form a b region. A c region spans residues 566–640 (LMQAAGQPVP…LNTLLMNLAK (75 aa)).

Belongs to the heat shock protein 90 family. In terms of assembly, homodimer.

It localises to the cytoplasm. Molecular chaperone. Has ATPase activity. The polypeptide is Chaperone protein HtpG (Pseudoalteromonas atlantica (strain T6c / ATCC BAA-1087)).